The sequence spans 609 residues: MFS siderochrome iron transporter 1 (609 aa).

2 stretches are compositionally biased toward basic and acidic residues: residues 1–17 and 25–34; these read MSALTKIREGLAREDNT and PHEKEIHETP. Residues 1 to 69 form a disordered region; the sequence is MSALTKIREG…NDSDVPSEDV (69 aa). Helical transmembrane passes span 81–101, 125–145, 154–174, 182–202, 220–240, 245–265, 300–320, 329–349, 368–390, 407–427, 432–452, 469–489, 496–516, and 573–593; these read LTWGKGSLAALLCLIWTLFLI, LMTTIPIVSDAMTAACYIPMA, AEGFLLMSGFATLGLILMAVS, AAQVFYSVGWGGMIYAVGVLA, SPYMITAFAGSKAAAAFVIDV, WGFGWIALVLPCVTIPLFLVL, VIGIFLFGGGLVVFLLPFNLA, TGYIIAMIIVGFCTLIFFGVW, SVVAACMIDLTYQVSYYTWNYFF, YVNSTFQVVSGVLLFIVGFLI, FYKWTFYFAVPIYIFALGLMI, IFISIGGAVFILVMQLAVLAA, AAALATLYVAGGVGGAVGGAI, and IRMLAAGVGIASLFFIWVPML.

The protein belongs to the major facilitator superfamily.

It localises to the cell membrane. In terms of biological role, major facilitator transporter involved in extracellular siderophore uptake. Gibberella zeae produces extracellular coprogen-type siderophores as well as the intracellular siderophore ferricrocin. The role of extracellular siderophores is to supply iron to the fungus during plant infection, and the intracellular ferricrocin is required for intracellular iron distribution and storage with a crucial role in ascus and ascospore development. This is MFS siderochrome iron transporter 1 from Gibberella zeae (strain ATCC MYA-4620 / CBS 123657 / FGSC 9075 / NRRL 31084 / PH-1) (Wheat head blight fungus).